The following is a 285-amino-acid chain: 4-diphosphocytidyl-2-C-methyl-D-erythritol kinase (285 aa).

The active site involves K12. 95 to 105 (PVGAGLAGGST) is a binding site for ATP. Residue D137 is part of the active site.

This sequence belongs to the GHMP kinase family. IspE subfamily.

It catalyses the reaction 4-CDP-2-C-methyl-D-erythritol + ATP = 4-CDP-2-C-methyl-D-erythritol 2-phosphate + ADP + H(+). Its pathway is isoprenoid biosynthesis; isopentenyl diphosphate biosynthesis via DXP pathway; isopentenyl diphosphate from 1-deoxy-D-xylulose 5-phosphate: step 3/6. Functionally, catalyzes the phosphorylation of the position 2 hydroxy group of 4-diphosphocytidyl-2C-methyl-D-erythritol. The polypeptide is 4-diphosphocytidyl-2-C-methyl-D-erythritol kinase (Syntrophomonas wolfei subsp. wolfei (strain DSM 2245B / Goettingen)).